The chain runs to 316 residues: tRNA dimethylallyltransferase (316 aa).

27–34 (GATATGKT) is a binding site for ATP. 29–34 (TATGKT) provides a ligand contact to substrate. Residues 52–55 (DSRQ) form an interaction with substrate tRNA region.

The protein belongs to the IPP transferase family. As to quaternary structure, monomer. Mg(2+) serves as cofactor.

The catalysed reaction is adenosine(37) in tRNA + dimethylallyl diphosphate = N(6)-dimethylallyladenosine(37) in tRNA + diphosphate. Catalyzes the transfer of a dimethylallyl group onto the adenine at position 37 in tRNAs that read codons beginning with uridine, leading to the formation of N6-(dimethylallyl)adenosine (i(6)A). The protein is tRNA dimethylallyltransferase of Treponema pallidum (strain Nichols).